We begin with the raw amino-acid sequence, 246 residues long: Ribonuclease PH (246 aa).

Residues Arg91 and 129-131 each bind phosphate; that span reads GTR.

This sequence belongs to the RNase PH family. Homohexameric ring arranged as a trimer of dimers.

The enzyme catalyses tRNA(n+1) + phosphate = tRNA(n) + a ribonucleoside 5'-diphosphate. Functionally, phosphorolytic 3'-5' exoribonuclease that plays an important role in tRNA 3'-end maturation. Removes nucleotide residues following the 3'-CCA terminus of tRNAs; can also add nucleotides to the ends of RNA molecules by using nucleoside diphosphates as substrates, but this may not be physiologically important. Probably plays a role in initiation of 16S rRNA degradation (leading to ribosome degradation) during starvation. The polypeptide is Ribonuclease PH (Burkholderia ambifaria (strain MC40-6)).